A 1369-amino-acid polypeptide reads, in one-letter code: DNA-directed RNA polymerase subunit beta (1369 aa).

The protein belongs to the RNA polymerase beta chain family. In terms of assembly, the RNAP catalytic core consists of 2 alpha, 1 beta, 1 beta' and 1 omega subunit. When a sigma factor is associated with the core the holoenzyme is formed, which can initiate transcription.

It catalyses the reaction RNA(n) + a ribonucleoside 5'-triphosphate = RNA(n+1) + diphosphate. In terms of biological role, DNA-dependent RNA polymerase catalyzes the transcription of DNA into RNA using the four ribonucleoside triphosphates as substrates. The protein is DNA-directed RNA polymerase subunit beta of Solidesulfovibrio magneticus (strain ATCC 700980 / DSM 13731 / RS-1) (Desulfovibrio magneticus).